Here is a 382-residue protein sequence, read N- to C-terminus: Putative NADPH dehydrogenase C5H10.04 (382 aa).

Threonine 28 and histidine 189 together coordinate FMN. Residues histidine 189 and asparagine 192 each coordinate substrate. FMN is bound by residues arginine 242 and arginine 334. Residue tyrosine 361 coordinates substrate.

It belongs to the NADH:flavin oxidoreductase/NADH oxidase family. Homodimer or heterodimer. It depends on FMN as a cofactor.

The catalysed reaction is A + NADPH + H(+) = AH2 + NADP(+). The sequence is that of Putative NADPH dehydrogenase C5H10.04 from Schizosaccharomyces pombe (strain 972 / ATCC 24843) (Fission yeast).